A 266-amino-acid polypeptide reads, in one-letter code: 4-hydroxy-tetrahydrodipicolinate reductase (266 aa).

Residues 7-12 (GTIGRM), Glu-33, 96-98 (GTT), and 120-123 (APNM) contribute to the NAD(+) site. Residue His-153 is the Proton donor/acceptor of the active site. Position 154 (His-154) interacts with (S)-2,3,4,5-tetrahydrodipicolinate. The Proton donor role is filled by Lys-157. 163-164 (GT) serves as a coordination point for (S)-2,3,4,5-tetrahydrodipicolinate.

Belongs to the DapB family.

Its subcellular location is the cytoplasm. The enzyme catalyses (S)-2,3,4,5-tetrahydrodipicolinate + NAD(+) + H2O = (2S,4S)-4-hydroxy-2,3,4,5-tetrahydrodipicolinate + NADH + H(+). It catalyses the reaction (S)-2,3,4,5-tetrahydrodipicolinate + NADP(+) + H2O = (2S,4S)-4-hydroxy-2,3,4,5-tetrahydrodipicolinate + NADPH + H(+). The protein operates within amino-acid biosynthesis; L-lysine biosynthesis via DAP pathway; (S)-tetrahydrodipicolinate from L-aspartate: step 4/4. In terms of biological role, catalyzes the conversion of 4-hydroxy-tetrahydrodipicolinate (HTPA) to tetrahydrodipicolinate. This is 4-hydroxy-tetrahydrodipicolinate reductase from Polynucleobacter necessarius subsp. necessarius (strain STIR1).